Reading from the N-terminus, the 184-residue chain is GMP synthase [glutamine-hydrolyzing] subunit A (184 aa).

The region spanning 3-184 (RIVVVDNHGQ…ENFRDICAGD (182 aa)) is the Glutamine amidotransferase type-1 domain. Residue C73 is the Nucleophile of the active site. Active-site residues include H161 and E163.

As to quaternary structure, heterodimer composed of a glutamine amidotransferase subunit (A) and a GMP-binding subunit (B).

The catalysed reaction is XMP + L-glutamine + ATP + H2O = GMP + L-glutamate + AMP + diphosphate + 2 H(+). The protein operates within purine metabolism; GMP biosynthesis; GMP from XMP (L-Gln route): step 1/1. Catalyzes the synthesis of GMP from XMP. This is GMP synthase [glutamine-hydrolyzing] subunit A from Natronomonas pharaonis (strain ATCC 35678 / DSM 2160 / CIP 103997 / JCM 8858 / NBRC 14720 / NCIMB 2260 / Gabara) (Halobacterium pharaonis).